Reading from the N-terminus, the 353-residue chain is Peptide chain release factor 1 (353 aa).

Gln-230 bears the N5-methylglutamine mark.

This sequence belongs to the prokaryotic/mitochondrial release factor family. In terms of processing, methylated by PrmC. Methylation increases the termination efficiency of RF1.

It localises to the cytoplasm. Peptide chain release factor 1 directs the termination of translation in response to the peptide chain termination codons UAG and UAA. This Gluconobacter oxydans (strain 621H) (Gluconobacter suboxydans) protein is Peptide chain release factor 1.